A 238-amino-acid polypeptide reads, in one-letter code: 7-cyano-7-deazaguanine synthase (238 aa).

14–24 provides a ligand contact to ATP; it reads FSGGQDSTTCL. Residues C195, C204, C207, and C210 each coordinate Zn(2+).

Belongs to the QueC family. It depends on Zn(2+) as a cofactor.

It carries out the reaction 7-carboxy-7-deazaguanine + NH4(+) + ATP = 7-cyano-7-deazaguanine + ADP + phosphate + H2O + H(+). Its pathway is purine metabolism; 7-cyano-7-deazaguanine biosynthesis. In terms of biological role, catalyzes the ATP-dependent conversion of 7-carboxy-7-deazaguanine (CDG) to 7-cyano-7-deazaguanine (preQ(0)). The polypeptide is 7-cyano-7-deazaguanine synthase (Baumannia cicadellinicola subsp. Homalodisca coagulata).